The chain runs to 76 residues: HERTHTGEKPFECSECHKRFTRDHHLKTHLRLHTGEKPYSCPHCPRHFVQVANLRRHLRVHTGERPYACARCPARF.

2 consecutive C2H2-type zinc fingers follow at residues 11–33 and 39–61; these read FECSECHKRFTRDHHLKTHLRLH and YSCPHCPRHFVQVANLRRHLRVH.

Belongs to the krueppel C2H2-type zinc-finger protein family.

The protein localises to the nucleus. In terms of biological role, krueppel is a gap class segmentation protein. This Manduca sexta (Tobacco hawkmoth) protein is Protein krueppel (Kr).